Reading from the N-terminus, the 450-residue chain is MSMEFDAVIIGGGVSGCATFYTLSEYSSLKRVAIVEKCSKLAQISSSAKANSQTIHDGSIETNYTPEKAKKVRLSAYKTRQYALNKGLQNEVIFETQKMAIGVGDEECEFMKKRYESFKEIFVGLEEFDKQKIKELEPNVILGANGIDRHENIIGHGYRKDWSTMNFAKLSENFVEEALKLKPNNQVFLNFKVKKIEKRNDTYAVISEDAEEVYAKFVLVNAGSYALPLAQSMGYGLDLGCLPVAGSFYFVPDLLRGKVYTVQNPKLPFAAVHGDPDAVIKGKTRIGPTALTMPKLERNKCWLKGISLELLKMDLNKDVFKIAFDLMSDKEIRNYVFKNMVFELPIIGKRKFLKDAQKIIPSLSLEDLEYAHGFGEVRPQVLDRTKRKLELGEKKICTHKGITFNMTPSPGATSCLQNALVDSQEIAAYLGESFELERFYKDLSPEELEN.

The protein belongs to the MQO family. FAD is required as a cofactor.

The protein resides in the cell membrane. It carries out the reaction (S)-malate + a quinone = a quinol + oxaloacetate. Its pathway is carbohydrate metabolism; tricarboxylic acid cycle; oxaloacetate from (S)-malate (quinone route): step 1/1. Its function is as follows. Catalyzes oxidation of malate to oxaloacetate in the citric acid cycle. Donates electrons to quinones of the electron transfer chain. The chain is Malate:quinone oxidoreductase (mqo) from Helicobacter pylori (strain ATCC 700392 / 26695) (Campylobacter pylori).